We begin with the raw amino-acid sequence, 370 residues long: 3-dehydroquinate synthase (370 aa).

NAD(+) contacts are provided by residues 107–111, 131–132, Lys-144, and Lys-153; these read GVIGD and TS. Glu-186, His-249, and His-267 together coordinate Zn(2+).

Belongs to the sugar phosphate cyclases superfamily. Dehydroquinate synthase family. Co(2+) serves as cofactor. Zn(2+) is required as a cofactor. Requires NAD(+) as cofactor.

Its subcellular location is the cytoplasm. The catalysed reaction is 7-phospho-2-dehydro-3-deoxy-D-arabino-heptonate = 3-dehydroquinate + phosphate. Its pathway is metabolic intermediate biosynthesis; chorismate biosynthesis; chorismate from D-erythrose 4-phosphate and phosphoenolpyruvate: step 2/7. Catalyzes the conversion of 3-deoxy-D-arabino-heptulosonate 7-phosphate (DAHP) to dehydroquinate (DHQ). The protein is 3-dehydroquinate synthase of Roseobacter denitrificans (strain ATCC 33942 / OCh 114) (Erythrobacter sp. (strain OCh 114)).